The primary structure comprises 177 residues: NADH-quinone oxidoreductase subunit B (177 aa).

Residues Cys-53, Cys-54, Cys-118, and Cys-148 each contribute to the [4Fe-4S] cluster site.

It belongs to the complex I 20 kDa subunit family. In terms of assembly, NDH-1 is composed of 14 different subunits. Subunits NuoB, C, D, E, F, and G constitute the peripheral sector of the complex. [4Fe-4S] cluster is required as a cofactor.

It localises to the cell membrane. It carries out the reaction a quinone + NADH + 5 H(+)(in) = a quinol + NAD(+) + 4 H(+)(out). In terms of biological role, NDH-1 shuttles electrons from NADH, via FMN and iron-sulfur (Fe-S) centers, to quinones in the respiratory chain. The immediate electron acceptor for the enzyme in this species is believed to be a menaquinone. Couples the redox reaction to proton translocation (for every two electrons transferred, four hydrogen ions are translocated across the cytoplasmic membrane), and thus conserves the redox energy in a proton gradient. This chain is NADH-quinone oxidoreductase subunit B, found in Anoxybacillus flavithermus (strain DSM 21510 / WK1).